The sequence spans 795 residues: Putative replication origin-binding protein (795 aa).

The Helicase ATP-binding domain maps to 121–289 (WLSNDKIKTL…DNFGKSIVVN (169 aa)). Residue 134–141 (SPMGTGKT) coordinates ATP.

This sequence belongs to the mimivirus R1 family.

Probably involved in DNA replication. May bind the genome origin of replication (ori). The chain is Putative replication origin-binding protein from Acanthamoeba polyphaga (Amoeba).